Here is a 539-residue protein sequence, read N- to C-terminus: Cytochrome P450 monooxygenase pvhE (539 aa).

The chain crosses the membrane as a helical span at residues 15 to 31 (VAFCSLVILCILFKVLT). Asn-379 carries N-linked (GlcNAc...) asparagine glycosylation. Cys-473 is a heme binding site.

Belongs to the cytochrome P450 family. Heme serves as cofactor.

It localises to the membrane. The protein operates within secondary metabolite biosynthesis. Its function is as follows. Cytochrome P450 monooxygenase; part of the gene cluster that mediates the biosynthesis of varicidin A, an antifungal natural product containing a cis-octahydrodecalin core. The PKS module of pvhA together with the enoylreductase pvhC catalyze the formation of the polyketide unit which is then conjugated to L-isoleucine by the condensation domain of the NRPS module. Activity of the Dieckmann cyclase domain (RED) of pvhA results in release of an acyclic tetramate. The cytochrome P450 monooxygenase pvhE then catalyzes the oxidation of the C21 methyl group to a to carboxylate group. The methyltransferase pvhD then further methylates the pvhE product. The Diels-Alderase pvhB is able to catalyze Diels-Alder cycloaddition using both pvhE and pvhD products as substrates to form the decalin ring, yielding varicidin B and A, respectively. In Talaromyces variabilis (Penicillium variabile), this protein is Cytochrome P450 monooxygenase pvhE.